The chain runs to 357 residues: Alanine racemase (357 aa).

Residue Lys35 is the Proton acceptor; specific for D-alanine of the active site. Lys35 bears the N6-(pyridoxal phosphate)lysine mark. Residue Arg130 participates in substrate binding. Residue Tyr253 is the Proton acceptor; specific for L-alanine of the active site. Met302 is a binding site for substrate.

This sequence belongs to the alanine racemase family. The cofactor is pyridoxal 5'-phosphate.

It carries out the reaction L-alanine = D-alanine. It functions in the pathway amino-acid biosynthesis; D-alanine biosynthesis; D-alanine from L-alanine: step 1/1. Catalyzes the interconversion of L-alanine and D-alanine. May also act on other amino acids. This Wigglesworthia glossinidia brevipalpis protein is Alanine racemase (alr).